A 298-amino-acid chain; its full sequence is Inosose dehydratase (298 aa).

It belongs to the IolE/MocC family. It depends on glutathione as a cofactor. Co(2+) serves as cofactor. Requires Mn(2+) as cofactor.

The enzyme catalyses scyllo-inosose = 3D-3,5/4-trihydroxycyclohexane-1,2-dione + H2O. In terms of biological role, catalyzes the dehydration of inosose (2-keto-myo-inositol, 2KMI or 2,4,6/3,5-pentahydroxycyclohexanone) to 3D-(3,5/4)-trihydroxycyclohexane-1,2-dione (D-2,3-diketo-4-deoxy-epi-inositol). This is Inosose dehydratase from Serratia proteamaculans (strain 568).